The chain runs to 155 residues: Small ribosomal subunit protein uS7c (155 aa).

This sequence belongs to the universal ribosomal protein uS7 family. In terms of assembly, part of the 30S ribosomal subunit.

It is found in the plastid. The protein resides in the chloroplast. One of the primary rRNA binding proteins, it binds directly to 16S rRNA where it nucleates assembly of the head domain of the 30S subunit. The protein is Small ribosomal subunit protein uS7c (rps7) of Typha angustifolia (Narrow leaf cattail).